Here is a 396-residue protein sequence, read N- to C-terminus: Elongation factor Tu (396 aa).

Residues 10 to 206 enclose the tr-type G domain; sequence KPHVNVGTIG…ALDSYIPDPE (197 aa). The G1 stretch occupies residues 19-26; sequence GHVDHGKT. 19 to 26 provides a ligand contact to GTP; the sequence is GHVDHGKT. Thr26 serves as a coordination point for Mg(2+). Residues 60–64 form a G2 region; the sequence is GITIN. The G3 stretch occupies residues 81–84; it reads DCPG. GTP-binding positions include 81 to 85 and 136 to 139; these read DCPGH and NKCD. Residues 136-139 form a G4 region; it reads NKCD. Positions 174-176 are G5; that stretch reads SAL.

Belongs to the TRAFAC class translation factor GTPase superfamily. Classic translation factor GTPase family. EF-Tu/EF-1A subfamily. Monomer.

The protein localises to the cytoplasm. The catalysed reaction is GTP + H2O = GDP + phosphate + H(+). Functionally, GTP hydrolase that promotes the GTP-dependent binding of aminoacyl-tRNA to the A-site of ribosomes during protein biosynthesis. This Dechloromonas aromatica (strain RCB) protein is Elongation factor Tu.